The following is a 333-amino-acid chain: Transcription initiation factor IIB (333 aa).

Residues 33–64 (EIYRCPICGNDRFVYNYERGEVVCIVCGAVVQ) form a TFIIB-type zinc finger. 4 residues coordinate Zn(2+): C37, C40, C56, and C59. 2 repeat units span residues 149-232 (QELE…LREL) and 243-324 (LYIS…ELAK).

The protein belongs to the TFIIB family.

Stabilizes TBP binding to an archaeal box-A promoter. Also responsible for recruiting RNA polymerase II to the pre-initiation complex (DNA-TBP-TFIIB). The protein is Transcription initiation factor IIB of Pyrobaculum arsenaticum (strain DSM 13514 / JCM 11321 / PZ6).